A 752-amino-acid polypeptide reads, in one-letter code: Complement C2 (752 aa).

An N-terminal signal peptide occupies residues 1–20 (MGPLMVLFCLLFLYPGLADS). 3 consecutive Sushi domains span residues 22 to 86 (PSCP…VCKP), 87 to 146 (VRCP…VCDN), and 149 to 206 (GHCP…ICRQ). 6 disulfide bridges follow: C24-C64, C51-C84, C89-C131, C117-C144, C151-C191, and C177-C204. N29 is a glycosylation site (N-linked (GlcNAc...) asparagine). Residue N112 is glycosylated (N-linked (GlcNAc...) asparagine). The region spanning 254 to 452 (NLYLLLDCSQ…KALHQVFEHM (199 aa)) is the VWFA domain. Positions 260–264 (DCSQS) match the MIDAS-like motif motif. The Mg(2+) site is built by S262 and S264. Residues S262 and S264 each contribute to the Mn(2+) site. N-linked (GlcNAc...) asparagine glycans are attached at residues N290 and N333. T337 is a binding site for Mg(2+). Mn(2+) is bound at residue T337. 3 disulfides stabilise this stretch: C463/C581, C492/C508, and C584/C600. Residues 464–744 (GVGNMSANAS…MQPWLRQHLG (281 aa)) form the Peptidase S1 domain. N467 and N471 each carry an N-linked (GlcNAc...) asparagine glycan. Residues H507 and D561 each act as charge relay system in the active site. Residue N621 is glycosylated (N-linked (GlcNAc...) asparagine). 2 disulfide bridges follow: C638–C665 and C675–C705. A glycan (N-linked (GlcNAc...) (complex) asparagine) is linked at N651. S679 acts as the Charge relay system in catalysis.

Belongs to the peptidase S1 family. In terms of assembly, serine protease component of the C3 convertase, also named C4bC2b, composed of the serine protease complement C2b and complement C4b. Serine protease component of the C5 convertase, also named C4bC2bC3b, composed of the serine protease complement C2b, complement C3b, as well as complement C4b. (Microbial infection) Interacts with Schistosoma haematobium TOR (via N-terminal extracellular domain). This results in inhibition of the classical and lectin pathway of complement activation, probably due to interference with binding of C2a to C4b such that C3 convertase cannot be formed. This infers resistance to complement-mediated cell lysis, allowing parasite survival and infection. It depends on Mg(2+) as a cofactor. Mn(2+) is required as a cofactor. In terms of processing, cleaved and activated by different proteases depending on the complement pathway to generate complement C2a and serine protease complement C2b chains. Cleaved and activated by C1S following activation by the classical complement system. Cleaved and activated by MASP2 following activation by the lectin complement system. Cleaved and activated by GZMK following activation by the GZMK complement system.

It localises to the secreted. The protein resides in the cell surface. The catalysed reaction is Selective cleavage of Arg-|-Ser bond in complement component C3 alpha-chain to form C3a and C3b, and Arg-|-Xaa bond in complement component C5 alpha-chain to form C5a and C5b.. Functionally, precursor of the catalytic component of the C3 and C5 convertase complexes, which are part of the complement pathway, a cascade of proteins that leads to phagocytosis and breakdown of pathogens and signaling that strengthens the adaptive immune system. Component C2 is part of the classical, lectin and GZMK complement systems. In terms of biological role, catalytic component of the complement C3 and C5 convertase complexes. Following complement activation, recruited to the surface of pathogens by complement C4b opsonin to form the C3 convertase, or C3b and C4b opsonins to form the C5 convertase. As part of the C3 convertase, cleaves and activate C3 into C3a anaphylatoxin and C3b opsonin, the next components of the complement pathways. As part of the C5 convertase, cleaves and activate C5 into C5a anaphylatoxin and C5b component of the membrane attack complex. The sequence is that of Complement C2 from Homo sapiens (Human).